We begin with the raw amino-acid sequence, 450 residues long: Phosphoglucosamine mutase (450 aa).

The active-site Phosphoserine intermediate is the Ser-100. Residues Ser-100, Asp-240, Asp-242, and Asp-244 each contribute to the Mg(2+) site. At Ser-100 the chain carries Phosphoserine.

This sequence belongs to the phosphohexose mutase family. Mg(2+) serves as cofactor. In terms of processing, activated by phosphorylation.

The enzyme catalyses alpha-D-glucosamine 1-phosphate = D-glucosamine 6-phosphate. Its function is as follows. Catalyzes the conversion of glucosamine-6-phosphate to glucosamine-1-phosphate. This Desulforudis audaxviator (strain MP104C) protein is Phosphoglucosamine mutase.